The primary structure comprises 258 residues: Imidazole glycerol phosphate synthase subunit HisF (258 aa).

Active-site residues include D11 and D130.

This sequence belongs to the HisA/HisF family. As to quaternary structure, heterodimer of HisH and HisF.

It is found in the cytoplasm. It catalyses the reaction 5-[(5-phospho-1-deoxy-D-ribulos-1-ylimino)methylamino]-1-(5-phospho-beta-D-ribosyl)imidazole-4-carboxamide + L-glutamine = D-erythro-1-(imidazol-4-yl)glycerol 3-phosphate + 5-amino-1-(5-phospho-beta-D-ribosyl)imidazole-4-carboxamide + L-glutamate + H(+). Its pathway is amino-acid biosynthesis; L-histidine biosynthesis; L-histidine from 5-phospho-alpha-D-ribose 1-diphosphate: step 5/9. In terms of biological role, IGPS catalyzes the conversion of PRFAR and glutamine to IGP, AICAR and glutamate. The HisF subunit catalyzes the cyclization activity that produces IGP and AICAR from PRFAR using the ammonia provided by the HisH subunit. The chain is Imidazole glycerol phosphate synthase subunit HisF from Shigella boydii serotype 4 (strain Sb227).